Reading from the N-terminus, the 121-residue chain is Large ribosomal subunit protein uL22 (121 aa).

The protein belongs to the universal ribosomal protein uL22 family. In terms of assembly, part of the 50S ribosomal subunit.

This protein binds specifically to 23S rRNA; its binding is stimulated by other ribosomal proteins, e.g. L4, L17, and L20. It is important during the early stages of 50S assembly. It makes multiple contacts with different domains of the 23S rRNA in the assembled 50S subunit and ribosome. Its function is as follows. The globular domain of the protein is located near the polypeptide exit tunnel on the outside of the subunit, while an extended beta-hairpin is found that lines the wall of the exit tunnel in the center of the 70S ribosome. This is Large ribosomal subunit protein uL22 from Salinibacter ruber (strain DSM 13855 / M31).